The chain runs to 118 residues: Large ribosomal subunit protein bL19 (118 aa).

The protein belongs to the bacterial ribosomal protein bL19 family.

This protein is located at the 30S-50S ribosomal subunit interface and may play a role in the structure and function of the aminoacyl-tRNA binding site. The chain is Large ribosomal subunit protein bL19 from Campylobacter jejuni subsp. doylei (strain ATCC BAA-1458 / RM4099 / 269.97).